Here is a 437-residue protein sequence, read N- to C-terminus: GTPase Obg (437 aa).

The region spanning 2 to 160 (SMFLDTAKIS…RQLELELKIL (159 aa)) is the Obg domain. Positions 161-338 (ADVGLVGFPS…LLEATAELLA (178 aa)) constitute an OBG-type G domain. GTP-binding positions include 167–174 (GFPSVGKS), 192–196 (FTTIV), 214–217 (DLPG), 284–287 (NKMD), and 319–321 (SSL). 2 residues coordinate Mg(2+): Ser-174 and Thr-194. Residues 359-437 (GFAEAEKDFE…IGKFEFEFVD (79 aa)) form the OCT domain.

It belongs to the TRAFAC class OBG-HflX-like GTPase superfamily. OBG GTPase family. As to quaternary structure, monomer. Requires Mg(2+) as cofactor.

It localises to the cytoplasm. An essential GTPase which binds GTP, GDP and possibly (p)ppGpp with moderate affinity, with high nucleotide exchange rates and a fairly low GTP hydrolysis rate. Plays a role in control of the cell cycle, stress response, ribosome biogenesis and in those bacteria that undergo differentiation, in morphogenesis control. The protein is GTPase Obg of Streptococcus pyogenes serotype M18 (strain MGAS8232).